The following is a 480-amino-acid chain: Glutamyl-tRNA(Gln) amidotransferase subunit A (480 aa).

Active-site charge relay system residues include K74 and S149. S173 serves as the catalytic Acyl-ester intermediate.

This sequence belongs to the amidase family. GatA subfamily. In terms of assembly, heterotrimer of A, B and C subunits.

The catalysed reaction is L-glutamyl-tRNA(Gln) + L-glutamine + ATP + H2O = L-glutaminyl-tRNA(Gln) + L-glutamate + ADP + phosphate + H(+). Functionally, allows the formation of correctly charged Gln-tRNA(Gln) through the transamidation of misacylated Glu-tRNA(Gln) in organisms which lack glutaminyl-tRNA synthetase. The reaction takes place in the presence of glutamine and ATP through an activated gamma-phospho-Glu-tRNA(Gln). This Prochlorococcus marinus (strain MIT 9312) protein is Glutamyl-tRNA(Gln) amidotransferase subunit A.